Here is a 626-residue protein sequence, read N- to C-terminus: Chaperone protein HtpG (626 aa).

The segment at 1-329 (MSEETLSFQA…SSDLPLNVSR (329 aa)) is a; substrate-binding. A b region spans residues 330-549 (EMLQDDPRLR…EGAMSLHLQK (220 aa)). The segment at 550-626 (LLRQANQGSE…LTEVMGKGLI (77 aa)) is c.

The protein belongs to the heat shock protein 90 family. As to quaternary structure, homodimer.

Its subcellular location is the cytoplasm. Its function is as follows. Molecular chaperone. Has ATPase activity. The chain is Chaperone protein HtpG from Rhodospirillum rubrum (strain ATCC 11170 / ATH 1.1.1 / DSM 467 / LMG 4362 / NCIMB 8255 / S1).